Here is a 226-residue protein sequence, read N- to C-terminus: UPF0758 protein GK2618 (226 aa).

The MPN domain occupies 104–226 (VIRCPEDGAK…FISLKEKGYV (123 aa)). Positions 175, 177, and 188 each coordinate Zn(2+). The JAMM motif signature appears at 175 to 188 (HNHPSGDPTPSRED).

The protein belongs to the UPF0758 family.

The polypeptide is UPF0758 protein GK2618 (Geobacillus kaustophilus (strain HTA426)).